Consider the following 609-residue polypeptide: UvrABC system protein C (609 aa).

The GIY-YIG domain maps to 22–100 (EKPGVYQYLN…IKKYKPRYNV (79 aa)). The region spanning 214 to 249 (QDISRMLVEKMQELANEMKFEEAQKIKEKYLLIENY) is the UVR domain.

The protein belongs to the UvrC family. Interacts with UvrB in an incision complex.

It localises to the cytoplasm. The UvrABC repair system catalyzes the recognition and processing of DNA lesions. UvrC both incises the 5' and 3' sides of the lesion. The N-terminal half is responsible for the 3' incision and the C-terminal half is responsible for the 5' incision. The chain is UvrABC system protein C from Bacteroides thetaiotaomicron (strain ATCC 29148 / DSM 2079 / JCM 5827 / CCUG 10774 / NCTC 10582 / VPI-5482 / E50).